The primary structure comprises 992 residues: MNSEASVFSNMDWSQLAHSLHKKANNSSSSTTGAFPQLTSFTKPTATNGVDSPTSSHIDPSVSAKLDSQRKLSLKSGNMWDSLNAPSELTSKNPTVSSTTSSANPAIVSNGGSPFYKNPVVANNPSSTFDMSTNLFNSKNANTSFTNAFSNEGISPGFLRDCFPSSNSITTGTASPKLGSPFNHINRPVLDRSPSSFSQSRSAVSGNMNPGVGTLQQPQRAGSDTFPDLNTSSSNQPGGEPNVASANTHSLEILSSSAYHPSGSSNGISAGLTQSVASPVGQVDNLADFSQSPLRRGPSRFPTNSNVPVGNSMSIRDTDSPLNILVDKAKAKASIKENASQPVAPSASQREHSAVNSPAAAMSPSTAMFSSEAFPQHLASLIPPALLHWLYKDPQNNVQGPFTGVDMHQWYRAGYFPLGLPIKRLEEEEYYSLAFFIRQVGNQLEPFLVPLSPVTVQNASWNAQGTDLPLSNYLPESSEQNRGGNKHLELYPSTAEVSNVRNDESKANSLSEISYNQQSECRSSELNVNEDSANQKEESALGTSDNSDMYEKENTPIHHNESLNQLSKDLGSISLSEETKQEKPSKLKETVESKRLSTGVQKQSPAASKEIPVTSGSQTTAPKPSPWKSLPPKHLPSLDETISREMSIASSEALPQVEKSNSDQPPVAIPSTSKTGSPWAKVSDVSTSMAQEIQRMEKQNENLKSKVASNPVSQTSTNAKASTPALASGSIWGSPSVINAWANKPAALKSPLIKKNIQQAELAQNKQQSSVTTASPRSNALNANTPKAAAPSSNVTMKNVTSILETSTFEGEDTWSVVGPGGKIVNQQSPSAQQTTRSPSKVSATLNAGNSQASTSSKLQQVVSMSGHSPDFLAWCKISLKGLNEGVNYEEFLDMLLSLPAENNVETFEIISDSIYANSTIMDGRRFASEFTRRRIADLTGKDGQQSNNKSQSELGNSSGAWSQVVRNKPKQGTEWNSAFKVVTSKKNKKRV.

Disordered stretches follow at residues 24 to 105, 172 to 245, and 289 to 316; these read ANNS…SANP, GTAS…NVAS, and FSQS…MSIR. 2 stretches are compositionally biased toward polar residues: residues 25–58 and 75–104; these read NNSS…SSHI and KSGN…SSAN. S175 bears the Phosphoserine mark. Residues 193-205 show a composition bias toward low complexity; sequence SPSSFSQSRSAVS. 2 stretches are compositionally biased toward polar residues: residues 214–237 and 301–315; these read TLQQ…SNQP and FPTN…SMSI. At T318 the chain carries Phosphothreonine. S320 carries the phosphoserine modification. Residues 336 to 359 form a disordered region; sequence KENASQPVAPSASQREHSAVNSPA. The segment covering 337–348 has biased composition (polar residues); it reads ENASQPVAPSAS. A GYF domain is found at 386–434; that stretch reads LLHWLYKDPQNNVQGPFTGVDMHQWYRAGYFPLGLPIKRLEEEEYYSLA. Disordered stretches follow at residues 467–486, 496–563, 576–637, 651–682, 697–729, 760–794, 818–859, and 940–992; these read DLPL…GGNK, EVSN…NESL, SEET…HLPS, SEAL…WAKV, EKQN…LASG, AELA…PSSN, VGPG…SSKL, and TGKD…KKRV. Polar residues-rich tracts occupy residues 474–483 and 507–532; these read LPESSEQNRG and ANSL…NEDS. S509 is subject to Phosphoserine. 2 stretches are compositionally biased toward basic and acidic residues: residues 549–561 and 577–595; these read MYEK…HHNE and EETK…ESKR. Residues 596 to 606 show a composition bias toward polar residues; sequence LSTGVQKQSPA. Residues S604 and S637 each carry the phosphoserine modification. 2 stretches are compositionally biased toward polar residues: residues 658-676 and 707-721; these read EKSN…SKTG and VASN…NAKA. 4 positions are modified to phosphoserine: S775, S829, S838, and S840. 2 stretches are compositionally biased toward polar residues: residues 825-859 and 943-966; these read VNQQ…SSKL and DGQQ…SQVV.

This sequence belongs to the SMY2/mpd2 family.

It localises to the cytoplasm. Its function is as follows. Has a role in mRNA export from the nucleus. The chain is GYF domain-containing protein mpd2 (mpd2) from Schizosaccharomyces pombe (strain 972 / ATCC 24843) (Fission yeast).